The following is a 410-amino-acid chain: Meiotic driver wtf18 (410 aa).

The tract at residues Met-1–Ser-39 is disordered. A compositionally biased stretch (basic and acidic residues) spans Ser-11–Pro-29. 10 helical membrane passes run Leu-89–Pro-109, Ala-119–Phe-139, Cys-149–Ala-169, Val-174–Ile-194, Cys-204–Tyr-224, Asp-229–Val-249, Cys-265–Leu-285, Leu-289–Leu-309, Ala-319–Tyr-339, and Phe-353–Gly-373.

Belongs to the WTF family. Homomer. Forms protein aggregates. The two isoforms can interact with each other and with themselves. High sequence similarity is required for their interaction.

The protein localises to the spore membrane. It is found in the vacuole membrane. The protein resides in the ascus epiplasm. Its subcellular location is the cytoplasm. It localises to the endoplasmic reticulum membrane. Promotes unequal transmission of alleles from the parental zygote to progeny spores by acting as poison/antidote system where the poison and antidote proteins are produced from the same locus; the poison component is trans-acting and targets all spores within an ascus whereas the antidote component is spore-specific, leading to poisoning of all progeny that do not inherit the allele. In terms of biological role, localizes isoform 2 to the vacuole thereby facilitating its degradation. In addition to suppressing isoform 2, also suppresses S.pombe strain 972 wtf13 isoform 2. Functionally, forms toxic aggregates that disrupt spore maturation. In Schizosaccharomyces pombe (Fission yeast), this protein is Meiotic driver wtf18.